A 379-amino-acid chain; its full sequence is Spermatogenesis-associated protein 17 (379 aa).

IQ domains follow at residues 48–77 (ENDAAVMIQSWFRGCQVRAYMRHLNRVVTI), 71–100 (LNRVVTIIQKWWRSYLGRKFYQLVVEAAYY), and 107–136 (YNEMAVRIQRRWRGFRIRKYCFNYYYLKEY).

In terms of tissue distribution, strongly expressed in adult testis but weakly expressed in the spleen and thymus. Strongly expressed in round and elongating spermatids, and weakly or not expressed in spermatozoa.

Its subcellular location is the cytoplasm. The protein is Spermatogenesis-associated protein 17 (Spata17) of Mus musculus (Mouse).